Here is a 512-residue protein sequence, read N- to C-terminus: MSESRWKGALLVAGTTSDAGKSVLVAGLCRMLARRGVRVAPFKAQNMSNNSVVTLDGGEIGRAQALQAAACGLEPSVRFNPVLLKPGSDRTSQLVVRGRAVTSVGARDYIEHRQHLRAVVAEELASLRADYDVVICEGAGSPAEINLRATDLANMGLARAAGLPVIVVGDIDRGGVLAHLFGTVAVLGPDDQALIAGFVINKFRGDVSLLGPGLEQLTAVTGRPTLGVIPFAEDLWLDAEDSLGVVGDAPVGRPAPPIGDDWLRVAAIRLPRISNSTDVEALACEPGVSVRWITDPSRLQDTDLIVLPGSKSTVSDLEWLRRNGIADAIAAHAKRGGPVLGVCGGYQMLGSVIVDDVESGRGAVPGLGLLDLEVEFAPDKVLAQVRGNAHGVPVSGYEIHHGRVRRNGDQPLLHASSGAAEGSIRGAVYGTHWHGLLETDRFRRLLLDDVAEHAGRTGFVTAPDTDVAAIRTAQLDLLADLVEQNLDLRALEDLLGAGAPEGLPAIASTLVS.

In terms of domain architecture, GATase cobBQ-type spans 262–442 (WLRVAAIRLP…WHGLLETDRF (181 aa)). The active-site Nucleophile is cysteine 343. The active site involves histidine 434.

The protein belongs to the CobB/CobQ family. CobQ subfamily.

It functions in the pathway cofactor biosynthesis; adenosylcobalamin biosynthesis. In terms of biological role, catalyzes amidations at positions B, D, E, and G on adenosylcobyrinic A,C-diamide. NH(2) groups are provided by glutamine, and one molecule of ATP is hydrogenolyzed for each amidation. In Rhodococcus jostii (strain RHA1), this protein is Cobyric acid synthase.